The chain runs to 122 residues: Large ribosomal subunit protein uL18 (122 aa).

It belongs to the universal ribosomal protein uL18 family. Part of the 50S ribosomal subunit; part of the 5S rRNA/L5/L18/L25 subcomplex. Contacts the 5S and 23S rRNAs.

This is one of the proteins that bind and probably mediate the attachment of the 5S RNA into the large ribosomal subunit, where it forms part of the central protuberance. This Fervidobacterium nodosum (strain ATCC 35602 / DSM 5306 / Rt17-B1) protein is Large ribosomal subunit protein uL18.